The sequence spans 341 residues: Long-chain acyl-[acyl-carrier-protein] reductase (341 aa).

This sequence belongs to the short-chain dehydrogenases/reductases (SDR) family. A divalent metal cation is required as a cofactor.

It carries out the reaction a long-chain fatty aldehyde + holo-[ACP] + NADP(+) = a long-chain fatty acyl-[ACP] + NADPH + H(+). It catalyses the reaction a long-chain fatty aldehyde + holo-[ACP] + NAD(+) = a long-chain fatty acyl-[ACP] + NADH + H(+). Its function is as follows. Catalyzes the NADP-dependent reduction of long-chain acyl-ACP to the corresponding fatty aldehyde. Involved in the biosynthesis of alkanes, mainly heptadecane and pentadecane, by producing the fatty aldehydes used by aldehyde decarbonylase. This Synechococcus elongatus (strain ATCC 33912 / PCC 7942 / FACHB-805) (Anacystis nidulans R2) protein is Long-chain acyl-[acyl-carrier-protein] reductase.